The chain runs to 269 residues: Undecaprenyl-diphosphatase (269 aa).

7 helical membrane passes run 42–62 (WDTF…ALYF), 83–103 (LTVL…HGVI), 110–130 (PYLP…LLVV), 142–162 (GMAL…LSLL), 186–206 (AEFS…LDLL), 219–239 (AIAI…KFLI), and 247–267 (FTPF…LIYI).

Belongs to the UppP family.

It localises to the cell inner membrane. It carries out the reaction di-trans,octa-cis-undecaprenyl diphosphate + H2O = di-trans,octa-cis-undecaprenyl phosphate + phosphate + H(+). Functionally, catalyzes the dephosphorylation of undecaprenyl diphosphate (UPP). Confers resistance to bacitracin. The chain is Undecaprenyl-diphosphatase from Caulobacter sp. (strain K31).